A 430-amino-acid chain; its full sequence is Tol-Pal system protein TolB (430 aa).

Residues 1-19 (MKKQIFFTLILLISGLARA) form the signal peptide.

It belongs to the TolB family. In terms of assembly, the Tol-Pal system is composed of five core proteins: the inner membrane proteins TolA, TolQ and TolR, the periplasmic protein TolB and the outer membrane protein Pal. They form a network linking the inner and outer membranes and the peptidoglycan layer.

It is found in the periplasm. Part of the Tol-Pal system, which plays a role in outer membrane invagination during cell division and is important for maintaining outer membrane integrity. This Hahella chejuensis (strain KCTC 2396) protein is Tol-Pal system protein TolB.